Consider the following 364-residue polypeptide: Serine/threonine-protein kinase ENV7 (364 aa).

S-palmitoyl cysteine attachment occurs at residues cysteine 13, cysteine 14, and cysteine 15. The Protein kinase domain occupies tyrosine 30–threonine 364. ATP contacts are provided by residues leucine 36–valine 44 and lysine 69. The active-site Proton acceptor is aspartate 215.

It belongs to the protein kinase superfamily. Ser/Thr protein kinase family.

Its subcellular location is the vacuole membrane. It catalyses the reaction L-seryl-[protein] + ATP = O-phospho-L-seryl-[protein] + ADP + H(+). The enzyme catalyses L-threonyl-[protein] + ATP = O-phospho-L-threonyl-[protein] + ADP + H(+). Functionally, serine/threonine-protein kinase involved in vacuolar processing and morphology. This Saccharomyces cerevisiae (strain ATCC 204508 / S288c) (Baker's yeast) protein is Serine/threonine-protein kinase ENV7 (ENV7).